Here is a 441-residue protein sequence, read N- to C-terminus: Proline--tRNA ligase (441 aa).

It belongs to the class-II aminoacyl-tRNA synthetase family. ProS type 2 subfamily. As to quaternary structure, homodimer.

It is found in the cytoplasm. It carries out the reaction tRNA(Pro) + L-proline + ATP = L-prolyl-tRNA(Pro) + AMP + diphosphate. Its function is as follows. Catalyzes the attachment of proline to tRNA(Pro) in a two-step reaction: proline is first activated by ATP to form Pro-AMP and then transferred to the acceptor end of tRNA(Pro). The sequence is that of Proline--tRNA ligase from Bartonella tribocorum (strain CIP 105476 / IBS 506).